We begin with the raw amino-acid sequence, 995 residues long: Zinc finger protein ZFPM1 (995 aa).

Residues 1-14 show a composition bias toward basic residues; that stretch reads MSRRKQSNPRQIKR. Positions 1-103 are disordered; that stretch reads MSRRKQSNPR…EAAMASPWSG (103 aa). The segment covering 15–36 has biased composition (basic and acidic residues); that stretch reads SLRDMEAGEEAKAMDSSPKEQE. Composition is skewed to acidic residues over residues 67–78 and 86–95; these read SPEDPEDMEGQE and EEKEEKEEEA. Phosphoserine occurs at positions 99 and 143. The CCHC FOG-type 1 zinc-finger motif lies at 249–282; sequence VINKDVFPCKDCGIWYRSERNLQAHLLYYCASRQ. Zn(2+)-binding residues include C257, C260, H273, and C278. Phosphoserine is present on S286. 3 C2H2-type zinc fingers span residues 303–327, 333–355, and 361–384; these read RVCP…MRSH, FVCL…LKVH, and GVCH…VTNH. Residues 343 to 354 form an interaction with TACC3 region; that stretch reads TTKANCERHLKV. Residues S397, S497, and S500 each carry the phosphoserine modification. The segment at 424–526 is disordered; sequence PLVPADKAPT…SSPGPGELTM (103 aa). The segment covering 509–525 has biased composition (low complexity); that stretch reads ELSSPTPGSSPGPGELT. The CCHC FOG-type 2 zinc finger occupies 584–617; the sequence is FSGTKGATCFECEITFNNINNFYVHKRLYCSGRR. Residues C592, C595, H608, and C613 each contribute to the Zn(2+) site. Positions 616–694 are disordered; the sequence is RRAPEDPPTV…SVDDAEDDPS (79 aa). Residues 630–652 show a composition bias toward low complexity; the sequence is AATGPARAPAGAAAEPDPSRSSP. 2 positions are modified to phosphoserine: S651 and S684. A CCHC FOG-type 3 zinc finger spans residues 690–723; the sequence is EDDPSRTLCEACNIRFSRHETYTVHKRYYCASRH. Zn(2+)-binding residues include C698, C701, H714, and C719. The interval 721–827 is disordered; that stretch reads SRHDPPPRRP…PRRQSPDAPT (107 aa). Pro residues-rich tracts occupy residues 728-740 and 764-779; these read RRPP…PGPA and GAPP…PVVP. Residues 785–800 show a composition bias toward low complexity; the sequence is LPSSPRPGSASAGPAP. A Phosphoserine modification is found at S803. The interval 811–817 is interaction with CTBP2; sequence PIDLSKR. S822 bears the Phosphoserine mark. The segment at 830–863 adopts a CCHC FOG-type 4 zinc-finger fold; it reads PALADYHECTACRVSFHSLEAYLAHKKYSCPAAP. Residues C838, C841, H854, and C859 each coordinate Zn(2+). The C2H2-type 4 zinc finger occupies 868 to 891; that stretch reads ALCPYCPPNGRVRGDLVEHLRQAH. The segment at 892 to 960 is disordered; it reads GLQVAKPAAS…APAPAPGGGG (69 aa). The segment covering 908–922 has biased composition (basic and acidic residues); the sequence is TPAERAPRDSPDGRA. 2 positions are modified to phosphoserine: S925 and S927. The CCHC FOG-type 5 zinc-finger motif lies at 957–990; sequence GGGGGHRYCRLCNIRFSSLSTFIAHKKYYCSSHA. C965, C968, H981, and C986 together coordinate Zn(2+).

The protein belongs to the FOG (Friend of GATA) family. In terms of assembly, interacts with the N-terminal zinc-finger of GATA1, GATA2 and GATA3. Interacts with corepressor CTBP2; this interaction is however not essential for corepressor activity in erythropoiesis. Interacts with TACC3. In terms of tissue distribution, mainly expressed in hematopoietic tissues. Expressed in the spleen, a primary site of hematopoiesis in the adult mouse, as well as in the liver and testis, but not in the heart, brain, lung, kidney, or skeletal muscle. Among hematopoietic cell lines, it is strongly expressed in erythroid and megakaryocytic cell lines. Expressed at low level in several lymphoid and early myeloid cell lines. Not expressed in mast cell and macrophage lines. Expressed in the heart, where it colocalizes with GATA4, GATA5 and GATA6.

It localises to the nucleus. In terms of biological role, transcription regulator that plays an essential role in erythroid and megakaryocytic cell differentiation. Essential cofactor that acts via the formation of a heterodimer with transcription factors of the GATA family GATA1, GATA2 and GATA3. Such heterodimer can both activate or repress transcriptional activity, depending on the cell and promoter context. The heterodimer formed with GATA proteins is essential to activate expression of genes such as NFE2, ITGA2B, alpha- and beta-globin, while it represses expression of KLF1. May be involved in regulation of some genes in gonads. May also be involved in cardiac development, in a non-redundant way with ZFPM2/FOG2. The polypeptide is Zinc finger protein ZFPM1 (Zfpm1) (Mus musculus (Mouse)).